Consider the following 277-residue polypeptide: Membrane protein insertase YidC 2 (277 aa).

The first 22 residues, 1–22, serve as a signal peptide directing secretion; sequence MKKYRKILAMLAVLAIVLVLSG. C23 carries N-palmitoyl cysteine lipidation. C23 is lipidated: S-diacylglycerol cysteine. 5 helical membrane-spanning segments follow: residues 35–55, 60–80, 130–150, 170–190, and 208–228; these read FWDG…SNLF, GLGI…LMIF, ASML…QAIW, PYYV…WLAM, and PVII…YWVI. Residues 251 to 266 are compositionally biased toward basic and acidic residues; that stretch reads EAKKQAERDRKRTLEK. The disordered stretch occupies residues 251-277; sequence EAKKQAERDRKRTLEKARKRAIRNHKR. The span at 267-277 shows a compositional bias: basic residues; that stretch reads ARKRAIRNHKR.

This sequence belongs to the OXA1/ALB3/YidC family. Type 2 subfamily.

The protein localises to the cell membrane. Required for the insertion and/or proper folding and/or complex formation of integral membrane proteins into the membrane. Involved in integration of membrane proteins that insert both dependently and independently of the Sec translocase complex, as well as at least some lipoproteins. This chain is Membrane protein insertase YidC 2, found in Lactiplantibacillus plantarum (strain ATCC BAA-793 / NCIMB 8826 / WCFS1) (Lactobacillus plantarum).